Reading from the N-terminus, the 1001-residue chain is Translation initiation factor IF-2 (1001 aa).

A disordered region spans residues 34–404; it reads KSHSSTISES…SRGDRRDRKE (371 aa). Positions 67–80 are enriched in basic and acidic residues; that stretch reads SRPESKEDKSDPKQ. 3 stretches are compositionally biased toward pro residues: residues 98–107, 147–157, and 163–172; these read PARPTPPPRP, PTQPLAPPPVP, and PSKPAPPTPP. Over residues 173–190 the composition is skewed to low complexity; that stretch reads AKKAAPAPRLAGPPGRTA. 2 stretches are compositionally biased toward basic and acidic residues: residues 212–230 and 238–252; these read SLKD…EEKV and PKPK…PPRP. The span at 332-342 shows a compositional bias: acidic residues; it reads DDDDDDLDIDG. 2 stretches are compositionally biased toward low complexity: residues 362–371 and 385–394; these read KSLAAKPSTP and AGSSAGGSSR. Positions 395 to 404 are enriched in basic and acidic residues; sequence SRGDRRDRKE. The region spanning 493-666 is the tr-type G domain; the sequence is RRPPVVTIMG…LLVSEVEELV (174 aa). The tract at residues 502–509 is G1; that stretch reads GHVDHGKT. 502-509 is a GTP binding site; sequence GHVDHGKT. A G2 region spans residues 527-531; the sequence is GITQH. The tract at residues 552–555 is G3; it reads DTPG. GTP contacts are provided by residues 552–556 and 606–609; these read DTPGH and NKVD. Positions 606-609 are G4; sequence NKVD. Positions 642–644 are G5; sequence SAL.

Belongs to the TRAFAC class translation factor GTPase superfamily. Classic translation factor GTPase family. IF-2 subfamily.

The protein localises to the cytoplasm. In terms of biological role, one of the essential components for the initiation of protein synthesis. Protects formylmethionyl-tRNA from spontaneous hydrolysis and promotes its binding to the 30S ribosomal subunits. Also involved in the hydrolysis of GTP during the formation of the 70S ribosomal complex. This chain is Translation initiation factor IF-2 (infB), found in Synechocystis sp. (strain ATCC 27184 / PCC 6803 / Kazusa).